The following is a 359-amino-acid chain: Histidinol-phosphate aminotransferase (359 aa).

Position 212 is an N6-(pyridoxal phosphate)lysine (Lys-212).

Belongs to the class-II pyridoxal-phosphate-dependent aminotransferase family. Histidinol-phosphate aminotransferase subfamily. As to quaternary structure, homodimer. It depends on pyridoxal 5'-phosphate as a cofactor.

It catalyses the reaction L-histidinol phosphate + 2-oxoglutarate = 3-(imidazol-4-yl)-2-oxopropyl phosphate + L-glutamate. It participates in amino-acid biosynthesis; L-histidine biosynthesis; L-histidine from 5-phospho-alpha-D-ribose 1-diphosphate: step 7/9. This Buchnera aphidicola subsp. Schlechtendalia chinensis protein is Histidinol-phosphate aminotransferase.